Consider the following 131-residue polypeptide: Fumarate reductase subunit C (131 aa).

A run of 3 helical transmembrane segments spans residues 30–50 (EGTAVPTVWFSIELIFGLFAL), 57–77 (WMGFVGFLQNPVVVILNLITL), and 109–129 (IIKGLWVVTAVVTVVILYVAL).

The protein belongs to the FrdC family. In terms of assembly, part of an enzyme complex containing four subunits: a flavoprotein (FrdA), an iron-sulfur protein (FrdB), and two hydrophobic anchor proteins (FrdC and FrdD).

It localises to the cell inner membrane. In terms of biological role, two distinct, membrane-bound, FAD-containing enzymes are responsible for the catalysis of fumarate and succinate interconversion; fumarate reductase is used in anaerobic growth, and succinate dehydrogenase is used in aerobic growth. Anchors the catalytic components of the fumarate reductase complex to the cell inner membrane, binds quinones. In Salmonella dublin (strain CT_02021853), this protein is Fumarate reductase subunit C.